Consider the following 267-residue polypeptide: Eukaryotic translation initiation factor 3 subunit K (267 aa).

The PCI domain maps to 46–233 (FDCYANLALL…EARSEVKSER (188 aa)).

This sequence belongs to the eIF-3 subunit K family. As to quaternary structure, component of the eukaryotic translation initiation factor 3 (eIF-3) complex.

It localises to the cytoplasm. Functionally, component of the eukaryotic translation initiation factor 3 (eIF-3) complex, which is involved in protein synthesis of a specialized repertoire of mRNAs and, together with other initiation factors, stimulates binding of mRNA and methionyl-tRNAi to the 40S ribosome. The eIF-3 complex specifically targets and initiates translation of a subset of mRNAs involved in cell proliferation. The polypeptide is Eukaryotic translation initiation factor 3 subunit K (Aspergillus niger (strain ATCC MYA-4892 / CBS 513.88 / FGSC A1513)).